Consider the following 199-residue polypeptide: Small ribosomal subunit protein uS14m (199 aa).

The segment at 28 to 67 is disordered; the sequence is LSTPAPEPAKPSSEETTESTEPATSVEDAGEPMKEKRITQ.

Belongs to the universal ribosomal protein uS14 family. Component of the mitochondrial ribosome small subunit (28S) which comprises a 12S rRNA and about 30 distinct proteins. Interacts with LIAT1.

The protein localises to the mitochondrion. The chain is Small ribosomal subunit protein uS14m (mrps-14) from Caenorhabditis elegans.